The sequence spans 631 residues: Probable potassium transport system protein Kup 1 (631 aa).

12 helical membrane-spanning segments follow: residues 16 to 36, 58 to 78, 109 to 129, 145 to 165, 173 to 193, 219 to 239, 255 to 275, 288 to 308, 345 to 365, 370 to 390, 402 to 422, and 427 to 447; these read LGLS…SPLY, VLSL…LVFV, VLVF…TLTP, PLFH…LFLI, VGAL…LLGI, GWSG…GEAL, WFCC…ALLL, LAPP…TIIA, IYIP…VAGF, GLAA…ALLV, PLAV…FFGA, and VGAG…VMIT.

Belongs to the HAK/KUP transporter (TC 2.A.72) family.

It is found in the cell inner membrane. It carries out the reaction K(+)(in) + H(+)(in) = K(+)(out) + H(+)(out). In terms of biological role, transport of potassium into the cell. Likely operates as a K(+):H(+) symporter. The chain is Probable potassium transport system protein Kup 1 from Geobacter sulfurreducens (strain ATCC 51573 / DSM 12127 / PCA).